A 258-amino-acid polypeptide reads, in one-letter code: Phosphate import ATP-binding protein PstB (258 aa).

One can recognise an ABC transporter domain in the interval 5 to 247 (IDISGLSAFY…ERIFSNPSVQ (243 aa)). Residue 37-44 (GPSGCGKS) coordinates ATP.

This sequence belongs to the ABC transporter superfamily. Phosphate importer (TC 3.A.1.7) family. In terms of assembly, the complex is composed of two ATP-binding proteins (PstB), two transmembrane proteins (PstC and PstA) and a solute-binding protein (PstS).

The protein localises to the cell membrane. The enzyme catalyses phosphate(out) + ATP + H2O = ADP + 2 phosphate(in) + H(+). Part of the ABC transporter complex PstSACB involved in phosphate import. Responsible for energy coupling to the transport system. The protein is Phosphate import ATP-binding protein PstB of Streptomyces griseus.